The primary structure comprises 111 residues: MMTLFTQEPSFSIKCLPTTPSKPHRSLLAARLLFLSISDFSCRCPKIKLSLKGYRFIYCVRVVPSPSSLAKAQSDRLNIGLIRRSLKLCCARDIRLELGQVLISIPLLLFL.

It is found in the mitochondrion. This is an uncharacterized protein from Arabidopsis thaliana (Mouse-ear cress).